Here is a 641-residue protein sequence, read N- to C-terminus: YAP1-binding protein 2 (641 aa).

Belongs to the YBP1 family.

The protein localises to the cytoplasm. Its function is as follows. Involved in oxidative stress response and redox homeostasis. Required for hydrogen peroxide-induced activation of YAP1. Acts in a parallele pathway to YBP1. The chain is YAP1-binding protein 2 from Saccharomyces cerevisiae (strain ATCC 204508 / S288c) (Baker's yeast).